A 611-amino-acid chain; its full sequence is Chaperone protein DnaK (611 aa).

T173 bears the Phosphothreonine; by autocatalysis mark. The segment covering 577–592 (QAAAGQAEGAQGAQDA) has biased composition (low complexity). The interval 577 to 611 (QAAAGQAEGAQGAQDAGTKKDNVVDAEFEEVKEDK) is disordered. Over residues 600–611 (VDAEFEEVKEDK) the composition is skewed to acidic residues.

Belongs to the heat shock protein 70 family.

Functionally, acts as a chaperone. This chain is Chaperone protein DnaK, found in Bacillus cereus (strain G9842).